A 374-amino-acid chain; its full sequence is Type IV secretion system protein PtlG homolog (374 aa).

Residues 38–56 (WMFALVAVALSCLLATGIW) traverse the membrane as a helical segment. The segment at 86-117 (HPREPEPAPLPDMPAAPDPILPQPRPAPPVPP) is disordered. Residues 92–117 (PAPLPDMPAAPDPILPQPRPAPPVPP) show a composition bias toward pro residues.

The protein belongs to the TrbI/VirB10 family.

It is found in the cell membrane. This chain is Type IV secretion system protein PtlG homolog (ptlG), found in Bordetella bronchiseptica (strain ATCC BAA-588 / NCTC 13252 / RB50) (Alcaligenes bronchisepticus).